Here is a 444-residue protein sequence, read N- to C-terminus: tRNA-2-methylthio-N(6)-dimethylallyladenosine synthase (444 aa).

In terms of domain architecture, MTTase N-terminal spans 10 to 126 (SSFYIHTFGC…LAGLVAGLRE (117 aa)). [4Fe-4S] cluster-binding residues include Cys-19, Cys-55, Cys-89, Cys-163, Cys-167, and Cys-170. The region spanning 149-379 (RAGSISAFLP…IELQNAISRE (231 aa)) is the Radical SAM core domain. The region spanning 382 to 444 (QREIGKTVEV…TSATLSGEAV (63 aa)) is the TRAM domain.

Belongs to the methylthiotransferase family. MiaB subfamily. Monomer. [4Fe-4S] cluster is required as a cofactor.

It localises to the cytoplasm. It carries out the reaction N(6)-dimethylallyladenosine(37) in tRNA + (sulfur carrier)-SH + AH2 + 2 S-adenosyl-L-methionine = 2-methylsulfanyl-N(6)-dimethylallyladenosine(37) in tRNA + (sulfur carrier)-H + 5'-deoxyadenosine + L-methionine + A + S-adenosyl-L-homocysteine + 2 H(+). Functionally, catalyzes the methylthiolation of N6-(dimethylallyl)adenosine (i(6)A), leading to the formation of 2-methylthio-N6-(dimethylallyl)adenosine (ms(2)i(6)A) at position 37 in tRNAs that read codons beginning with uridine. The protein is tRNA-2-methylthio-N(6)-dimethylallyladenosine synthase of Chlorobaculum tepidum (strain ATCC 49652 / DSM 12025 / NBRC 103806 / TLS) (Chlorobium tepidum).